Consider the following 193-residue polypeptide: Hypoxanthine/guanine phosphoribosyltransferase (193 aa).

Belongs to the purine/pyrimidine phosphoribosyltransferase family. Archaeal HPRT subfamily. As to quaternary structure, homodimer.

The protein localises to the cytoplasm. The catalysed reaction is IMP + diphosphate = hypoxanthine + 5-phospho-alpha-D-ribose 1-diphosphate. It carries out the reaction GMP + diphosphate = guanine + 5-phospho-alpha-D-ribose 1-diphosphate. It functions in the pathway purine metabolism; IMP biosynthesis via salvage pathway; IMP from hypoxanthine: step 1/1. Catalyzes a salvage reaction resulting in the formation of IMP that is energically less costly than de novo synthesis. Prefers hypoxanthine, has 66% activity with guanine while activity with adenine, xanthine, uracil, orotate, or cytosine is negligible. In Methanothermobacter marburgensis (strain ATCC BAA-927 / DSM 2133 / JCM 14651 / NBRC 100331 / OCM 82 / Marburg) (Methanobacterium thermoautotrophicum), this protein is Hypoxanthine/guanine phosphoribosyltransferase.